A 431-amino-acid polypeptide reads, in one-letter code: Trigger factor (431 aa).

A PPIase FKBP-type domain is found at 158-243; sequence GHLVALETWS…VIEVSEPVLL (86 aa).

Belongs to the FKBP-type PPIase family. Tig subfamily.

Its subcellular location is the cytoplasm. The enzyme catalyses [protein]-peptidylproline (omega=180) = [protein]-peptidylproline (omega=0). In terms of biological role, involved in protein export. Acts as a chaperone by maintaining the newly synthesized protein in an open conformation. Functions as a peptidyl-prolyl cis-trans isomerase. The chain is Trigger factor (tig) from Xylella fastidiosa (strain 9a5c).